The chain runs to 328 residues: Ketol-acid reductoisomerase (NADP(+)) (328 aa).

The 181-residue stretch at 2–182 (AKIYTDREAS…GATRAGVIET (181 aa)) folds into the KARI N-terminal Rossmann domain. Residues 25-28 (YGIQ), R48, S53, and 83-86 (DMEQ) contribute to the NADP(+) site. H108 is an active-site residue. NADP(+) is bound at residue G134. The 146-residue stretch at 183 to 328 (TFAEETETDL…EEMRKLLFGP (146 aa)) folds into the KARI C-terminal knotted domain. D191, E195, E227, and E231 together coordinate Mg(2+). S252 lines the substrate pocket.

Belongs to the ketol-acid reductoisomerase family. Mg(2+) is required as a cofactor.

The enzyme catalyses (2R)-2,3-dihydroxy-3-methylbutanoate + NADP(+) = (2S)-2-acetolactate + NADPH + H(+). It catalyses the reaction (2R,3R)-2,3-dihydroxy-3-methylpentanoate + NADP(+) = (S)-2-ethyl-2-hydroxy-3-oxobutanoate + NADPH + H(+). The protein operates within amino-acid biosynthesis; L-isoleucine biosynthesis; L-isoleucine from 2-oxobutanoate: step 2/4. It participates in amino-acid biosynthesis; L-valine biosynthesis; L-valine from pyruvate: step 2/4. Its function is as follows. Involved in the biosynthesis of branched-chain amino acids (BCAA). Catalyzes an alkyl-migration followed by a ketol-acid reduction of (S)-2-acetolactate (S2AL) to yield (R)-2,3-dihydroxy-isovalerate. In the isomerase reaction, S2AL is rearranged via a Mg-dependent methyl migration to produce 3-hydroxy-3-methyl-2-ketobutyrate (HMKB). In the reductase reaction, this 2-ketoacid undergoes a metal-dependent reduction by NADPH to yield (R)-2,3-dihydroxy-isovalerate. In Pyrobaculum aerophilum (strain ATCC 51768 / DSM 7523 / JCM 9630 / CIP 104966 / NBRC 100827 / IM2), this protein is Ketol-acid reductoisomerase (NADP(+)).